The primary structure comprises 204 residues: FMN-dependent NADH:quinone oxidoreductase 2 (204 aa).

Residues Ser10 and 16–18 (SIS) contribute to the FMN site.

Belongs to the azoreductase type 1 family. Homodimer. It depends on FMN as a cofactor.

It catalyses the reaction 2 a quinone + NADH + H(+) = 2 a 1,4-benzosemiquinone + NAD(+). The catalysed reaction is N,N-dimethyl-1,4-phenylenediamine + anthranilate + 2 NAD(+) = 2-(4-dimethylaminophenyl)diazenylbenzoate + 2 NADH + 2 H(+). Quinone reductase that provides resistance to thiol-specific stress caused by electrophilic quinones. Functionally, also exhibits azoreductase activity. Catalyzes the reductive cleavage of the azo bond in aromatic azo compounds to the corresponding amines. The polypeptide is FMN-dependent NADH:quinone oxidoreductase 2 (Jannaschia sp. (strain CCS1)).